Reading from the N-terminus, the 456-residue chain is Bifunctional protein GlmU (456 aa).

The tract at residues Met1–Arg229 is pyrophosphorylase. UDP-N-acetyl-alpha-D-glucosamine is bound by residues Leu11–Gly14, Lys25, Gln76, Gly81–Thr82, Tyr103–Asp105, Gly140, Glu154, Asn169, and Asn227. Asp105 is a binding site for Mg(2+). Residue Asn227 participates in Mg(2+) binding. Residues Leu230 to Ser250 are linker. The interval Gly251 to Lys456 is N-acetyltransferase. The UDP-N-acetyl-alpha-D-glucosamine site is built by Arg333 and Lys351. The active-site Proton acceptor is His363. UDP-N-acetyl-alpha-D-glucosamine-binding residues include Tyr366 and Asn377. Residues Ala380, Asn386–Tyr387, Ser405, Ala423, and Arg440 contribute to the acetyl-CoA site.

It in the N-terminal section; belongs to the N-acetylglucosamine-1-phosphate uridyltransferase family. The protein in the C-terminal section; belongs to the transferase hexapeptide repeat family. In terms of assembly, homotrimer. The cofactor is Mg(2+).

The protein localises to the cytoplasm. The enzyme catalyses alpha-D-glucosamine 1-phosphate + acetyl-CoA = N-acetyl-alpha-D-glucosamine 1-phosphate + CoA + H(+). It carries out the reaction N-acetyl-alpha-D-glucosamine 1-phosphate + UTP + H(+) = UDP-N-acetyl-alpha-D-glucosamine + diphosphate. It functions in the pathway nucleotide-sugar biosynthesis; UDP-N-acetyl-alpha-D-glucosamine biosynthesis; N-acetyl-alpha-D-glucosamine 1-phosphate from alpha-D-glucosamine 6-phosphate (route II): step 2/2. It participates in nucleotide-sugar biosynthesis; UDP-N-acetyl-alpha-D-glucosamine biosynthesis; UDP-N-acetyl-alpha-D-glucosamine from N-acetyl-alpha-D-glucosamine 1-phosphate: step 1/1. Its pathway is bacterial outer membrane biogenesis; LPS lipid A biosynthesis. Functionally, catalyzes the last two sequential reactions in the de novo biosynthetic pathway for UDP-N-acetylglucosamine (UDP-GlcNAc). The C-terminal domain catalyzes the transfer of acetyl group from acetyl coenzyme A to glucosamine-1-phosphate (GlcN-1-P) to produce N-acetylglucosamine-1-phosphate (GlcNAc-1-P), which is converted into UDP-GlcNAc by the transfer of uridine 5-monophosphate (from uridine 5-triphosphate), a reaction catalyzed by the N-terminal domain. In Salmonella dublin (strain CT_02021853), this protein is Bifunctional protein GlmU.